The primary structure comprises 419 residues: Tyrosine--tRNA ligase 2 (419 aa).

Tyrosine 34 serves as a coordination point for L-tyrosine. The short motif at 39-48 (PTGDSMHIGH) is the 'HIGH' region element. L-tyrosine-binding residues include tyrosine 168 and glutamine 172. Residues 230-234 (KFGKS) carry the 'KMSKS' region motif. Position 233 (lysine 233) interacts with ATP. Residues 352-418 (KNIVEWLVDL…GKKNYSLVKL (67 aa)) enclose the S4 RNA-binding domain.

The protein belongs to the class-I aminoacyl-tRNA synthetase family. TyrS type 1 subfamily. As to quaternary structure, homodimer.

The protein localises to the cytoplasm. The catalysed reaction is tRNA(Tyr) + L-tyrosine + ATP = L-tyrosyl-tRNA(Tyr) + AMP + diphosphate + H(+). Its function is as follows. Catalyzes the attachment of tyrosine to tRNA(Tyr) in a two-step reaction: tyrosine is first activated by ATP to form Tyr-AMP and then transferred to the acceptor end of tRNA(Tyr). In Bacillus cereus (strain ATCC 10987 / NRS 248), this protein is Tyrosine--tRNA ligase 2.